The primary structure comprises 226 residues: Protein B (226 aa).

The segment at 37 to 100 (DNVQGTDYEK…FSTQHLANKV (64 aa)) is igG constant region-binding. 3 repeats span residues 158–168 (TKSKLDKEIWN), 169–179 (TRFTRDKKVLN), and 180–190 (VKEFKVYNTLN).

It is found in the secreted. In terms of biological role, protein B belongs to the group of bacterial Fc-binding protein. The chain is Protein B from Streptococcus agalactiae.